The sequence spans 479 residues: MSIPRLKSYLSMFAAVLMLGQVLSAQAEEALPDFTTLVEQASPAVVNISTKQKLPDRRIAAGQMPDLEGLPPMFREFFERNMPQQPRSPRGDRQREAQSLGSGFIISSDGYVLTNNHVVADADEIIVRLSDRSELQAKLVGTDPRTDVALLKVDGKNLPTVKLGDSEKLKVGEWVLAIGSPFGFDHSVTKGIVSAKGRTLPNDTYVPFIQTDVAINPGNSGGPLFNMNGEVVGINSQIFTRSGGFMGLSFAIPIDVAIDVSNQLKKDGKVSRGWLGVVIQEVNKDLAESFGLDKPAGALVAQVLEDGPAAKSGLQVGDVILSMNGQPIVMSADLPHLVGTLKAGAKAKLEIIRNGKRQNLDVTIGAMPDDDADIGTGTGADGSAERSSNRLGVSVSDLTAEQKKSLELKGGVVIKEVQDGPAAMIGLRPGDVISHLNNQAIASAKQFTEIAKDLPKNRSVSMRVLRQGRASFITFKLAE.

The signal sequence occupies residues 1-27 (MSIPRLKSYLSMFAAVLMLGQVLSAQA). Catalysis depends on charge relay system residues H117, D147, and S220. Substrate is bound by residues 218-220 (GNS) and 275-279 (LGVVI). PDZ domains follow at residues 264-355 (LKKD…IRNG) and 361-468 (DVTI…LRQG). Positions 368–395 (PDDDADIGTGTGADGSAERSSNRLGVSV) are disordered.

The protein belongs to the peptidase S1C family.

The protein localises to the periplasm. The enzyme catalyses Acts on substrates that are at least partially unfolded. The cleavage site P1 residue is normally between a pair of hydrophobic residues, such as Val-|-Val.. In terms of biological role, might be efficient in the degradation of transiently denatured and unfolded proteins which accumulate in the periplasm following stress conditions. The sequence is that of Probable periplasmic serine endoprotease DegP-like from Pseudomonas putida (strain W619).